We begin with the raw amino-acid sequence, 21 residues long: Granulitoxin (21 aa).

A disordered region spans residues Ala-1 to Thr-21.

The protein resides in the secreted. Its subcellular location is the nematocyst. Injection into mice produces severe neurotoxic effects such as circular movements, aggressive behavior, dyspnea, tonic-clonic convulsion and death. The sequence is that of Granulitoxin from Bunodosoma cangicum (Sea anemone).